We begin with the raw amino-acid sequence, 117 residues long: Hemerythrin subunit beta (117 aa).

7 residues coordinate Fe cation: H24, H53, E57, H72, H76, H105, and D110.

It belongs to the hemerythrin family. In terms of assembly, octamer composed of two types of chains: alpha and beta.

Functionally, hemerythrin is a respiratory protein in blood cells of certain marine worms. The oxygen-binding site in each chain contains two iron atoms. The sequence is that of Hemerythrin subunit beta from Lingula reevii (Inarticulated brachiopod).